A 257-amino-acid chain; its full sequence is Triosephosphate isomerase, cytosolic (257 aa).

Residues Asn10 and Lys12 each contribute to the substrate site. His96 acts as the Electrophile in catalysis. Glu167 acts as the Proton acceptor in catalysis.

Belongs to the triosephosphate isomerase family. In terms of assembly, homodimer. Higher levels found in leaves than in roots.

It is found in the cytoplasm. The catalysed reaction is D-glyceraldehyde 3-phosphate = dihydroxyacetone phosphate. It participates in carbohydrate biosynthesis; gluconeogenesis. The protein operates within carbohydrate degradation; glycolysis; D-glyceraldehyde 3-phosphate from glycerone phosphate: step 1/1. The chain is Triosephosphate isomerase, cytosolic (TPI) from Stellaria longipes (Longstalk starwort).